The chain runs to 143 residues: Hemoglobin subunit alpha (143 aa).

Positions 3-143 constitute a Globin domain; it reads KLSGEDKANV…TMRLCISKYR (141 aa). O2 is bound at residue H60. H89 lines the heme b pocket.

The protein belongs to the globin family. As to quaternary structure, heterotetramer of two alpha chains and two beta chains. As to expression, red blood cells.

Involved in oxygen transport from the lung to the various peripheral tissues. The sequence is that of Hemoglobin subunit alpha (HBA) from Ambystoma mexicanum (Axolotl).